The primary structure comprises 745 residues: Cullin-2 (745 aa).

Lys393 carries the N6-acetyllysine modification. Residue Thr661 is modified to Phosphothreonine. In terms of domain architecture, Cullin neddylation spans 675–735; it reads DRKMYLQAAI…IDKQYIERSQ (61 aa). Lys689 is covalently cross-linked (Glycyl lysine isopeptide (Lys-Gly) (interchain with G-Cter in NEDD8)).

This sequence belongs to the cullin family. As to quaternary structure, component of multiple Cul2-RING (CRL2) E3 ubiquitin-protein ligase complexes consisting of CUL2, Elongin BC (ELOB and ELOC), RBX1 and a variable substrate-specific adapter; this complex is also known as ECS (Elongin BC-CUL2/5-SOCS-box protein) complex and may consist of CUL2 or CUL5. Component of the ECS(VHL) or CBC(VHL) complex containing CUL2, RBX1, ELOB, ELOC and VHL. Component of the ECS(MED8) complex with the probable substrate recognition component MED8. Component of multiple ECS complexes part of the DesCEND (destruction via C-end degrons) pathway, which contain either KLHDC2, KLHDC3, KLHDC10, APPBP2, FEM1A, FEM1B or FEM1C as substrate-recognition component. Component of the ECS(LRR1) complex with the substrate recognition component LRR1. Component of a CRL2(FEM1B) complex containing CUL2, RBX1, ELOB, ELOC and FEM1B. Component of a CRL2(FEM1C) complex containing CUL2, RBX1, ELOB, ELOC and FEM1C. Part of an E3 ubiquitin-protein ligase complex including ZYG11B, CUL2 and Elongin BC. Part of an E3 ubiquitin-protein ligase complex including ZER1, CUL2 and Elongin BC. Interacts with RBX1, RNF7, FEM1B and TIP120A/CAND1. Found in a complex composed of LIMD1, VHL, EGLN1/PHD2, ELOB and CUL2. Interacts (when neddylated) with ARIH1; leading to activate the E3 ligase activity of ARIH1. Interacts (unneddylated form) with DCUN1D1, DCUN1D2, DCUN1D3, DCUN1D4 and DCUN1D5; these interactions promote the cullin neddylation. Component of VCB (elongins BC/CUL2/VHL) complex that contains at least DCUN1D1, CUL2 and VHL; this complex triggers CUL2 neddylation and consequently cullin ring ligase (CRL) substrates polyubiquitylation. Neddylated; which enhances the ubiquitination activity of ECS (Elongin BC-CUL2/5-SOCS-box protein) E3 ubiquitin-protein ligase complexes. Neddylation leads to structural rearrangment in the complex that allows interaction between the E2 ubiquitin-conjugating enzyme and the acceptor ubiquitin. CBC(VHL) complex formation seems to promote neddylation. Deneddylated via its interaction with the COP9 signalosome (CSN) complex.

It is found in the nucleus. It functions in the pathway protein modification; protein ubiquitination. Its function is as follows. Core component of multiple cullin-RING-based ECS (ElonginB/C-CUL2/5-SOCS-box protein) E3 ubiquitin-protein ligase complexes, which mediate the ubiquitination of target proteins. CUL2 may serve as a rigid scaffold in the complex and may contribute to catalysis through positioning of the substrate and the ubiquitin-conjugating enzyme. The E3 ubiquitin-protein ligase activity of the complex is dependent on the neddylation of the cullin subunit and is inhibited by the association of the deneddylated cullin subunit with TIP120A/CAND1. The functional specificity of the ECS complex depends on the substrate recognition component. ECS(VHL) mediates the ubiquitination of hypoxia-inducible factor (HIF). A number of ECS complexes (containing either KLHDC2, KLHDC3, KLHDC10, APPBP2, FEM1A, FEM1B or FEM1C as substrate-recognition component) are part of the DesCEND (destruction via C-end degrons) pathway, which recognizes a C-degron located at the extreme C terminus of target proteins, leading to their ubiquitination and degradation. ECS complexes and ARIH1 collaborate in tandem to mediate ubiquitination of target proteins. ECS(LRR1) ubiquitinates MCM7 and promotes CMG replisome disassembly by VCP and chromatin extraction during S-phase. The sequence is that of Cullin-2 (CUL2) from Pongo abelii (Sumatran orangutan).